A 358-amino-acid chain; its full sequence is Peptide chain release factor 1 (358 aa).

Position 236 is an N5-methylglutamine (Gln-236).

This sequence belongs to the prokaryotic/mitochondrial release factor family. In terms of processing, methylated by PrmC. Methylation increases the termination efficiency of RF1.

Its subcellular location is the cytoplasm. Functionally, peptide chain release factor 1 directs the termination of translation in response to the peptide chain termination codons UAG and UAA. This is Peptide chain release factor 1 from Corynebacterium glutamicum (strain ATCC 13032 / DSM 20300 / JCM 1318 / BCRC 11384 / CCUG 27702 / LMG 3730 / NBRC 12168 / NCIMB 10025 / NRRL B-2784 / 534).